The sequence spans 698 residues: Glycine--tRNA ligase beta subunit (698 aa).

Belongs to the class-II aminoacyl-tRNA synthetase family. In terms of assembly, tetramer of two alpha and two beta subunits.

The protein resides in the cytoplasm. The enzyme catalyses tRNA(Gly) + glycine + ATP = glycyl-tRNA(Gly) + AMP + diphosphate. This is Glycine--tRNA ligase beta subunit from Xanthomonas campestris pv. campestris (strain 8004).